Consider the following 143-residue polypeptide: MEYTNMMELNFLSKSQNESFARTVVAAFAAQLDPTIEEIADIKTAVSEAVTNCIIHGYENKIGIITIKAFISGNKITIEVIDEGKGIEDIEKAMQPLFTTRLEEERAGMGFTVMQTFMDELEVESTPGKGTLVRMTKYIGSDK.

Belongs to the anti-sigma-factor family.

The enzyme catalyses L-seryl-[protein] + ATP = O-phospho-L-seryl-[protein] + ADP + H(+). It carries out the reaction L-threonyl-[protein] + ATP = O-phospho-L-threonyl-[protein] + ADP + H(+). Functionally, binds to sigma F and blocks its ability to form an RNA polymerase holoenzyme (E-sigma F). Phosphorylates SpoIIAA on a serine residue. This phosphorylation may enable SpoIIAA to act as an anti-anti-sigma factor that counteracts SpoIIAB and thus releases sigma F from inhibition. The protein is Anti-sigma F factor of Thermoanaerobacter pseudethanolicus (strain ATCC 33223 / 39E) (Clostridium thermohydrosulfuricum).